A 361-amino-acid chain; its full sequence is Aminomethyltransferase (361 aa).

It belongs to the GcvT family. In terms of assembly, the glycine cleavage system is composed of four proteins: P, T, L and H.

The enzyme catalyses N(6)-[(R)-S(8)-aminomethyldihydrolipoyl]-L-lysyl-[protein] + (6S)-5,6,7,8-tetrahydrofolate = N(6)-[(R)-dihydrolipoyl]-L-lysyl-[protein] + (6R)-5,10-methylene-5,6,7,8-tetrahydrofolate + NH4(+). Functionally, the glycine cleavage system catalyzes the degradation of glycine. The polypeptide is Aminomethyltransferase (Phocaeicola vulgatus (strain ATCC 8482 / DSM 1447 / JCM 5826 / CCUG 4940 / NBRC 14291 / NCTC 11154) (Bacteroides vulgatus)).